The primary structure comprises 400 residues: Iron(III) enterobactin esterase (400 aa).

It belongs to the Fes family. In terms of assembly, monomer.

It is found in the cytoplasm. It catalyses the reaction Fe(III)-enterobactin + 3 H2O + H(+) = Fe(III)-[N-(2,3-dihydroxybenzoyl)-L-serine] + 2 N-(2,3-dihydroxybenzoyl)-L-serine. The enzyme catalyses Fe(III)-enterobactin + H2O = Fe(III)-[N-(2,3-dihydroxybenzoyl)-L-serine]3 + H(+). The catalysed reaction is Fe(III)-[N-(2,3-dihydroxybenzoyl)-L-serine]3 + H2O + H(+) = Fe(III)-[N-(2,3-dihydroxybenzoyl)-L-serine]2 + N-(2,3-dihydroxybenzoyl)-L-serine. It carries out the reaction Fe(III)-[N-(2,3-dihydroxybenzoyl)-L-serine]2 + H2O + H(+) = Fe(III)-[N-(2,3-dihydroxybenzoyl)-L-serine] + N-(2,3-dihydroxybenzoyl)-L-serine. It catalyses the reaction enterobactin + 3 H2O = 3 N-(2,3-dihydroxybenzoyl)-L-serine + 2 H(+). Its activity is regulated as follows. Inhibited by N-ethylmaleimide. Functionally, catalyzes the hydrolysis of ferric enterobactin (Fe-Ent). Is responsible for the release of iron from ferric enterobactin. Also catalyzes the hydrolysis of iron-free enterobactin (Ent). Cleavage of ferric enterobactin results in a mixture of three hydrolysis products, 2,3-dihydroxybenzoylserine (DHBS), the linear dimer (DHBS)2 and the linear trimer (DHBS)3, while cleavage of iron-free enterobactin yields only the monomer. Hydrolysis of ferric enterobactin is less efficient than hydrolysis of unliganded enterobactin. It also cleaves the aluminum (III) complex at a rate similar to the ferric complex. The polypeptide is Iron(III) enterobactin esterase (Escherichia coli (strain K12)).